The chain runs to 248 residues: MIVLVTGATAGFGECITRRFIQQGHKVIATGRRQERLQELTDELGDNLYIAQLDVRNRAAIEEMLASLPAEWSNIDILVNNAGLALGMEPAHKASVEDWETMIDTNNKGLVYMTRAVLPGMVERNHGHIINIGSTAGSWPYAGGNVYGATKAFVRQFSLNLRTDLHGTTVRVTDIEPGLVGGTEFSNVRFKGDDGKAEKTYQNTVALTPEDVSEAVWWVSTLPAHVNINTLEMMPVTQSYAGLNVHRQ.

Residues G7 to F12, R32 to R33, D54 to V55, and N81 contribute to the NADP(+) site. Residue S134 coordinates substrate. NADP(+) contacts are provided by residues Y147, K151, and P177 to F185. Y147 serves as the catalytic Proton acceptor.

Belongs to the short-chain dehydrogenases/reductases (SDR) family. In terms of assembly, homotetramer.

It catalyses the reaction 3-hydroxypropanoate + NADP(+) = 3-oxopropanoate + NADPH + H(+). The enzyme catalyses L-allo-threonine + NADP(+) = aminoacetone + CO2 + NADPH. Its function is as follows. NADP-dependent dehydrogenase with broad substrate specificity acting on 3-hydroxy acids. Catalyzes the NADP-dependent oxidation of L-allo-threonine to L-2-amino-3-keto-butyrate, which is spontaneously decarboxylated into aminoacetone. Also acts on D-threonine, L-serine, D-serine, D-3-hydroxyisobutyrate, L-3-hydroxyisobutyrate, D-glycerate and L-glycerate. Able to catalyze the reduction of the malonic semialdehyde to 3-hydroxypropionic acid. YdfG is apparently supplementing RutE, the presumed malonic semialdehyde reductase involved in pyrimidine degradation since both are able to detoxify malonic semialdehyde. The chain is NADP-dependent 3-hydroxy acid dehydrogenase YdfG from Shigella flexneri.